The chain runs to 184 residues: NADH-quinone oxidoreductase subunit B (184 aa).

[4Fe-4S] cluster-binding residues include C63, C64, C128, and C158.

The protein belongs to the complex I 20 kDa subunit family. In terms of assembly, NDH-1 is composed of 14 different subunits. Subunits NuoB, C, D, E, F, and G constitute the peripheral sector of the complex. The cofactor is [4Fe-4S] cluster.

The protein localises to the cell inner membrane. It catalyses the reaction a quinone + NADH + 5 H(+)(in) = a quinol + NAD(+) + 4 H(+)(out). Its function is as follows. NDH-1 shuttles electrons from NADH, via FMN and iron-sulfur (Fe-S) centers, to quinones in the respiratory chain. Couples the redox reaction to proton translocation (for every two electrons transferred, four hydrogen ions are translocated across the cytoplasmic membrane), and thus conserves the redox energy in a proton gradient. This Xanthomonas campestris pv. campestris (strain 8004) protein is NADH-quinone oxidoreductase subunit B.